A 154-amino-acid chain; its full sequence is Transcriptional repressor NrdR (154 aa).

Residues 1–22 (MECPNCHKNASRVIDSRPSDEN) form a disordered region. A zinc finger lies at 3-34 (CPNCHKNASRVIDSRPSDENRAIRRRRECENC). One can recognise an ATP-cone domain in the interval 49-139 (LLVVKNDGTR…IYRQFKDVSG (91 aa)).

This sequence belongs to the NrdR family. Requires Zn(2+) as cofactor.

In terms of biological role, negatively regulates transcription of bacterial ribonucleotide reductase nrd genes and operons by binding to NrdR-boxes. This chain is Transcriptional repressor NrdR, found in Lactobacillus johnsonii (strain CNCM I-12250 / La1 / NCC 533).